The primary structure comprises 367 residues: Phosphoribosylaminoimidazole-succinocarboxamide synthase (367 aa).

It belongs to the SAICAR synthetase family.

The enzyme catalyses 5-amino-1-(5-phospho-D-ribosyl)imidazole-4-carboxylate + L-aspartate + ATP = (2S)-2-[5-amino-1-(5-phospho-beta-D-ribosyl)imidazole-4-carboxamido]succinate + ADP + phosphate + 2 H(+). It participates in purine metabolism; IMP biosynthesis via de novo pathway; 5-amino-1-(5-phospho-D-ribosyl)imidazole-4-carboxamide from 5-amino-1-(5-phospho-D-ribosyl)imidazole-4-carboxylate: step 1/2. The sequence is that of Phosphoribosylaminoimidazole-succinocarboxamide synthase from Shewanella halifaxensis (strain HAW-EB4).